Here is a 1200-residue protein sequence, read N- to C-terminus: Ice nucleation protein (1200 aa).

Positions 176-1151 (ATYGSTLSGD…LSAGEDSILI (976 aa)) are octapeptide periodicity.

The protein belongs to the bacterial ice nucleation protein family.

It is found in the cell outer membrane. Ice nucleation proteins enable bacteria to nucleate crystallization in supercooled water. The polypeptide is Ice nucleation protein (inaZ) (Pseudomonas syringae pv. syringae).